Here is a 286-residue protein sequence, read N- to C-terminus: 4-hydroxybenzoate octaprenyltransferase (286 aa).

7 consecutive transmembrane segments (helical) span residues 22–42 (IGTLLLLWPTLWALYLAEKAM), 45–65 (LSVLAIFIFGVFLMRSAGCVI), 98–118 (LFIVLVFCSFLLVLCLNLYTI), 143–163 (FFLGAAFGWSIPMAYGATIEA), 213–233 (IIALLQIITLIFLFSVGYLSQ), 238–255 (YFIVLAIAGLFFVYQCRL), and 266–286 (NAFLNNNYFGLTVFIAVLFGI).

The protein belongs to the UbiA prenyltransferase family. It depends on Mg(2+) as a cofactor.

It is found in the cell inner membrane. It carries out the reaction all-trans-octaprenyl diphosphate + 4-hydroxybenzoate = 4-hydroxy-3-(all-trans-octaprenyl)benzoate + diphosphate. Its pathway is cofactor biosynthesis; ubiquinone biosynthesis. Its function is as follows. Catalyzes the prenylation of para-hydroxybenzoate (PHB) with an all-trans polyprenyl group. Mediates the second step in the final reaction sequence of ubiquinone-8 (UQ-8) biosynthesis, which is the condensation of the polyisoprenoid side chain with PHB, generating the first membrane-bound Q intermediate 3-octaprenyl-4-hydroxybenzoate. In Histophilus somni (strain 2336) (Haemophilus somnus), this protein is 4-hydroxybenzoate octaprenyltransferase.